Here is a 548-residue protein sequence, read N- to C-terminus: Chaperonin GroEL (548 aa).

Residues 30 to 33 (TLGP), lysine 51, 87 to 91 (DGTTT), glycine 415, 479 to 481 (NAA), and aspartate 495 contribute to the ATP site.

The protein belongs to the chaperonin (HSP60) family. Forms a cylinder of 14 subunits composed of two heptameric rings stacked back-to-back. Interacts with the co-chaperonin GroES.

It is found in the cytoplasm. The enzyme catalyses ATP + H2O + a folded polypeptide = ADP + phosphate + an unfolded polypeptide.. Together with its co-chaperonin GroES, plays an essential role in assisting protein folding. The GroEL-GroES system forms a nano-cage that allows encapsulation of the non-native substrate proteins and provides a physical environment optimized to promote and accelerate protein folding. The sequence is that of Chaperonin GroEL from Salmonella gallinarum (strain 287/91 / NCTC 13346).